Here is a 194-residue protein sequence, read N- to C-terminus: Dephospho-CoA kinase (194 aa).

A DPCK domain is found at 4–194; sequence VIGLTGSIGM…VKEILQKLGA (191 aa). Residue 12 to 17 participates in ATP binding; it reads GMGKTT.

It belongs to the CoaE family.

Its subcellular location is the cytoplasm. It carries out the reaction 3'-dephospho-CoA + ATP = ADP + CoA + H(+). It functions in the pathway cofactor biosynthesis; coenzyme A biosynthesis; CoA from (R)-pantothenate: step 5/5. Its function is as follows. Catalyzes the phosphorylation of the 3'-hydroxyl group of dephosphocoenzyme A to form coenzyme A. This Agrobacterium fabrum (strain C58 / ATCC 33970) (Agrobacterium tumefaciens (strain C58)) protein is Dephospho-CoA kinase.